The chain runs to 472 residues: MGAVLGVFSLASWVPCLCGGASCLLCSCCPNSKNSTLTRLIYAFILFLGTIVCCIMFHEGMETQLKKIPGFCDEGLSTRITDIMDKECDVLVRYKAVYRISFALAVFFFAFSLLMLNVKTSKDPRAAIHNGFWFFKIAAIVGVMVGSFYIPGGHFNTAWFVIGMVGAAFFILIQLVLLVDFAHSWNESWVNRMEEGNPKCWYAALLSVTSLFYILSIIFAGLLYTYYTKPDGCTENKFFISFNLILCVVISVLSIHPKIQEHQPRSGLLQSSLITLYTMYLTWSAMSNEPDRSCNPGLLSIITHMTSSTLAPANTTAPAPTPAVPLQSGPSLNKENFIGLLVFVLSLSYSSIRNSSNSQVSKLTLSGSDSVILRDTAANGASDEEDGRPRRAVDNEREGVQYNYSMFHLMLCSASLYIMMTLTNWYSPDANFQSMTSKWPAVWVKISSSWVCLLLYVWTLVAPLVLTNRDFS.

Over 1-95 the chain is Extracellular; the sequence is MGAVLGVFSL…KECDVLVRYK (95 aa). N-linked (GlcNAc...) asparagine glycosylation occurs at Asn34. The helical transmembrane segment at 96–116 threads the bilayer; that stretch reads AVYRISFALAVFFFAFSLLML. Over 117–131 the chain is Cytoplasmic; sequence NVKTSKDPRAAIHNG. A helical membrane pass occupies residues 132–152; that stretch reads FWFFKIAAIVGVMVGSFYIPG. The Extracellular segment spans residues 153-158; that stretch reads GHFNTA. The chain crosses the membrane as a helical span at residues 159–179; sequence WFVIGMVGAAFFILIQLVLLV. The Cytoplasmic portion of the chain corresponds to 180–202; the sequence is DFAHSWNESWVNRMEEGNPKCWY. A helical transmembrane segment spans residues 203 to 223; the sequence is AALLSVTSLFYILSIIFAGLL. Over 224 to 238 the chain is Extracellular; sequence YTYYTKPDGCTENKF. A helical transmembrane segment spans residues 239 to 259; the sequence is FISFNLILCVVISVLSIHPKI. Over 260–328 the chain is Cytoplasmic; the sequence is QEHQPRSGLL…APTPAVPLQS (69 aa). Residues 329-349 traverse the membrane as a helical segment; it reads GPSLNKENFIGLLVFVLSLSY. At 350–405 the chain is on the extracellular side; it reads SSIRNSSNSQVSKLTLSGSDSVILRDTAANGASDEEDGRPRRAVDNEREGVQYNYS. Asn354 carries an N-linked (GlcNAc...) asparagine glycan. Ser370 carries the phosphoserine modification. Residue Asn403 is glycosylated (N-linked (GlcNAc...) asparagine). Residues 406 to 426 traverse the membrane as a helical segment; that stretch reads MFHLMLCSASLYIMMTLTNWY. Over 427–445 the chain is Cytoplasmic; sequence SPDANFQSMTSKWPAVWVK. A helical membrane pass occupies residues 446-466; sequence ISSSWVCLLLYVWTLVAPLVL. Residues 467–472 lie on the Extracellular side of the membrane; it reads TNRDFS.

Belongs to the TDE1 family. In terms of processing, N-glycosylated.

The protein resides in the cell membrane. It localises to the golgi apparatus membrane. It carries out the reaction a 1,2-diacyl-sn-glycero-3-phospho-L-serine(in) = a 1,2-diacyl-sn-glycero-3-phospho-L-serine(out). It catalyses the reaction a 1,2-diacyl-sn-glycero-3-phosphocholine(in) = a 1,2-diacyl-sn-glycero-3-phosphocholine(out). The enzyme catalyses a 1,2-diacyl-sn-glycero-3-phosphoethanolamine(in) = a 1,2-diacyl-sn-glycero-3-phosphoethanolamine(out). In terms of biological role, restriction factor required to restrict infectivity of gammaretroviruses: acts by inhibiting an early step of viral infection. Impairs the penetration of the viral particle into the cytoplasm. Non-ATP-dependent, non-specific lipid transporter for phosphatidylserine, phosphatidylcholine, and phosphatidylethanolamine. Functions as a scramblase that flips lipids in both directions across the membrane. Phospholipid scrambling results in gammaretroviral surface exposure of phosphatidylserine and loss of membrane asymmetry, which leads to loss of infectivity. In Bos taurus (Bovine), this protein is Serine incorporator 3 (SERINC3).